The following is a 225-amino-acid chain: Ribose-5-phosphate isomerase A (225 aa).

Substrate is bound by residues 26–29, 82–85, and 95–98; these read TGST, DGAD, and KGGG. E104 serves as the catalytic Proton acceptor. Residue K122 coordinates substrate.

It belongs to the ribose 5-phosphate isomerase family. In terms of assembly, homodimer.

The enzyme catalyses aldehydo-D-ribose 5-phosphate = D-ribulose 5-phosphate. It participates in carbohydrate degradation; pentose phosphate pathway; D-ribose 5-phosphate from D-ribulose 5-phosphate (non-oxidative stage): step 1/1. Catalyzes the reversible conversion of ribose-5-phosphate to ribulose 5-phosphate. This is Ribose-5-phosphate isomerase A from Streptococcus mutans serotype c (strain ATCC 700610 / UA159).